We begin with the raw amino-acid sequence, 357 residues long: DNA integrity scanning protein DisA (357 aa).

Residues 8 to 146 (VKSMINILQL…GNLRYTLKDI (139 aa)) enclose the DAC domain. ATP is bound by residues Gly-75, Leu-93, and 106-110 (MRHRT).

Belongs to the DisA family. In terms of assembly, homooctamer. Requires Mg(2+) as cofactor.

It carries out the reaction 2 ATP = 3',3'-c-di-AMP + 2 diphosphate. Participates in a DNA-damage check-point that is active prior to asymmetric division when DNA is damaged. DisA forms globular foci that rapidly scan along the chromosomes during sporulation, searching for lesions. When a lesion is present, DisA pauses at the lesion site. This triggers a cellular response that culminates in a temporary block in sporulation initiation. In terms of biological role, also has diadenylate cyclase activity, catalyzing the condensation of 2 ATP molecules into cyclic di-AMP (c-di-AMP). c-di-AMP acts as a signaling molecule that couples DNA integrity with progression of sporulation. The rise in c-di-AMP level generated by DisA while scanning the chromosome, operates as a positive signal that advances sporulation; upon encountering a lesion, the DisA focus arrests at the damaged site and halts c-di-AMP synthesis. The chain is DNA integrity scanning protein DisA from Bacillus cereus (strain ATCC 14579 / DSM 31 / CCUG 7414 / JCM 2152 / NBRC 15305 / NCIMB 9373 / NCTC 2599 / NRRL B-3711).